The chain runs to 1022 residues: D-2-hydroxyglutarate dehydrogenase (1022 aa).

The region spanning 53 to 286 (YQLLPDAVLF…SEARLDITPL (234 aa)) is the FAD-binding PCMH-type domain. (R)-2-hydroxyglutarate contacts are provided by R407 and H505. The 4Fe-4S ferredoxin-type domain occupies 667–700 (FSHEVKEAMSGCLACKACSTQCPIKIDVPAFRSR). [4Fe-4S] cluster contacts are provided by C678, C681, C684, and C688.

This sequence in the N-terminal section; belongs to the FAD-binding oxidoreductase/transferase type 4 family. In terms of assembly, homotetramer. Requires [4Fe-4S] cluster as cofactor. The cofactor is FAD.

The catalysed reaction is (R)-2-hydroxyglutarate + A = 2-oxoglutarate + AH2. Its activity is regulated as follows. Activity is completely inhibited by the addition of 0.5 mM Mn(2+), Ni(2+), or Co(2+) and partially inhibited by 0.5 mM Zn(2+). Catalyzes the oxidation of D-2-hydroxyglutarate (D-2-HGA) to 2-oxoglutarate. Appears to be the only D2HGDH in P.ananatis, providing the way to recycle D-2-HGA produced during L-serine synthesis by SerA, by converting it back to 2-oxoglutarate. Is involved in the utilization of D-2-HGA, that can support the growth of P.ananatis as a sole carbon source, although it barely serves as a good substrate. The physiological molecule that functions as the primary electron acceptor during D-2-HGA oxidation by YdiJ in P.ananatis is unknown. Shows strict substrate specificity towards D-2-HGA, since it has no detectable activity on L-2-hydroxyglutarate, L-malate, D-malate, L-lactate, D-lactate, L-tartrate, D-tartrate, L-glycerate, D-glycerate, glutarate, or pyruvate. This chain is D-2-hydroxyglutarate dehydrogenase, found in Pantoea ananatis (strain AJ13355).